Here is a 415-residue protein sequence, read N- to C-terminus: F-box/kelch-repeat protein At2g29600 (415 aa).

Residues 1–58 form a disordered region; it reads MASISETSDDGSNGGDPNQKPEEPHKNPQEGKEEENQNEKPKEDDHQEEEVENVPQIP. Residues 19-45 are compositionally biased toward basic and acidic residues; that stretch reads QKPEEPHKNPQEGKEEENQNEKPKEDD. Positions 56-103 constitute an F-box domain; sequence QIPPQMPLELIVSTIATLRRCHYPTLSLLSDSFRQVISSVDLFQTRSL. 4 Kelch repeats span residues 161–208, 210–254, 260–309, and 311–355; these read KIYV…VIDG, IYVV…FNVH, KIYI…AVVP, and HLHV…KLMI.

This is F-box/kelch-repeat protein At2g29600 from Arabidopsis thaliana (Mouse-ear cress).